The following is a 255-amino-acid chain: Small ribosomal subunit protein eS1 (255 aa).

A compositionally biased stretch (basic residues) spans 1 to 18; that stretch reads MAVGKNKRLSKGKKGLKK. Positions 1 to 28 are disordered; sequence MAVGKNKRLSKGKKGLKKRTQDPFSRKD. N-acetylalanine; partial is present on alanine 2. A compositionally biased stretch (basic and acidic residues) spans 19–28; it reads RTQDPFSRKD.

It belongs to the eukaryotic ribosomal protein eS1 family. Component of the small ribosomal subunit. Mature ribosomes consist of a small (40S) and a large (60S) subunit. The 40S subunit contains about 33 different proteins and 1 molecule of RNA (18S). The 60S subunit contains about 49 different proteins and 3 molecules of RNA (25S, 5.8S and 5S).

It localises to the cytoplasm. This Ajellomyces capsulatus (strain NAm1 / WU24) (Darling's disease fungus) protein is Small ribosomal subunit protein eS1.